Here is a 462-residue protein sequence, read N- to C-terminus: Keratin, type I cytoskeletal 28 (462 aa).

The interval 1–26 (MSLRFSGGSRHVGIQSGSLRPPSGGA) is disordered. The segment at 1-83 (MSLRFSGGSR…GSEGGLLSGN (83 aa)) is head. Positions 84–119 (EKVTMQNLNNRLASYLDNVKALEEANSELERKIKTW) are coil 1A. Positions 84 to 399 (EKVTMQNLNN…RLIDGDENSC (316 aa)) constitute an IF rod domain. Positions 120–141 (HEKYGPGSCRGLDRDYSKYHLT) are linker 1. A coil 1B region spans residues 142-233 (IEDLKSKIIS…KNHEEEMKVL (92 aa)). Residues 234 to 256 (QCAAGGNVNVEMNAAPGVDLTVL) form a linker 12 region. The interval 257 to 395 (LNNMRAEYEA…ETYCRLIDGD (139 aa)) is coil 2. The tail stretch occupies residues 396–462 (ENSCSVSKGF…NGKAEQRVPF (67 aa)).

Belongs to the intermediate filament family. Heterotetramer of two type I and two type II keratins. In the hair follicle and bulb, uniformly expressed in all three layers of the inner root sheath (the Henle layer, the Huxley layer and the cuticle) and observed in matrix cells (at protein level).

The protein resides in the cytoplasm. Essential for the proper assembly of types I and II keratin protein complexes and the formation of keratin intermediate filaments in the inner root sheath (irs). The chain is Keratin, type I cytoskeletal 28 from Mus musculus (Mouse).